A 62-amino-acid polypeptide reads, in one-letter code: MPKIEVKNDDLELALKKFKRISLEVRRLAQRHEYHLRKGMRLREKQKIAQKKRRKFRSLASH.

It belongs to the bacterial ribosomal protein bS21 family.

The chain is Small ribosomal subunit protein bS21 (rpsU) from Mycoplasma genitalium (strain ATCC 33530 / DSM 19775 / NCTC 10195 / G37) (Mycoplasmoides genitalium).